The chain runs to 727 residues: MQKAFRNVLVIAIIGVIIFGVFSYINGNGNTPKQLSYSQFVEKLDKGDLKTLEIQPEQNVYLVSGKTKNDEDYSSTILYNNEKDLQKITNEAKSQKGLDFKVKEEEKQSVFVSMLTTLIPVLIIAFLFIFFLSQAQGGGGGGRMMNFGKSKAKMYDNQKRRVRFSDVAGADEEKQELIEIVDFLKDNKKFKQMGSRIPKGVLLVGPPGTGKTLLARAVAGEAGAPFFSISGSDFVEMFVGVGASRVRDLFENAKKNAPCIIFIDEIDAVGRQRGAGVGGGHDEREQTLNQLLVEMDGFGENEGIIMIAATNRPDILDPALLRPGRFDRQIQVGRPDVKGREAILHVHSKNKPLDETVDLKAISQRTPGFSGADLENLLNEASLIAAREGKNKIDMRDIEEATDRVIAGPAKKSRVISDKERNIVAHHEAGHTVIGMVLDEAEVVHKVTIVPRGQAGGYAMMLPKQDRFLMTEPELLDKICGLLGGRVSEDINFHEVSTGASNDFERATQIARSMVTEYGMSKKLGPLQFSSSGGGQVFLGKDMQGEPNYSGQIAYEIDKEVQRIIKEQYERCKQILLDHEKELKLIAKTLLTEETLVAEQIRSLFYDGVLPEVDYDAARVVKDEDSDYSEGKYGKSYDDIREEQLEEGKEDMREDRKEDNDMNRERRHRQRDDRDNQTGHDQLRDGSNGDNDQHRGHSNNEEDTGHEQSPNIDKPYNPNDPNNPSNR.

Over M1 to R6 the chain is Cytoplasmic. A helical membrane pass occupies residues N7 to G27. Residues N28 to V110 are Extracellular-facing. Residues F111–F131 form a helical membrane-spanning segment. Topologically, residues L132–R727 are cytoplasmic. G205–T212 serves as a coordination point for ATP. A Zn(2+)-binding site is contributed by H427. Residue E428 is part of the active site. 2 residues coordinate Zn(2+): H431 and D503. Basic and acidic residues-rich tracts occupy residues L645 to R684 and N691 to H706. The disordered stretch occupies residues L645–R727. Residues P710–R727 are compositionally biased toward low complexity.

It in the central section; belongs to the AAA ATPase family. The protein in the C-terminal section; belongs to the peptidase M41 family. In terms of assembly, homohexamer. Zn(2+) serves as cofactor.

It is found in the cell membrane. Its function is as follows. Acts as a processive, ATP-dependent zinc metallopeptidase for both cytoplasmic and membrane proteins. Plays a role in the quality control of integral membrane proteins. In Staphylococcus haemolyticus (strain JCSC1435), this protein is ATP-dependent zinc metalloprotease FtsH.